A 142-amino-acid polypeptide reads, in one-letter code: Putative pre-16S rRNA nuclease (142 aa).

It belongs to the YqgF nuclease family.

It is found in the cytoplasm. Could be a nuclease involved in processing of the 5'-end of pre-16S rRNA. This is Putative pre-16S rRNA nuclease from Chlorobaculum tepidum (strain ATCC 49652 / DSM 12025 / NBRC 103806 / TLS) (Chlorobium tepidum).